The primary structure comprises 398 residues: Homeobox protein knotted-1-like 1 (398 aa).

Disordered stretches follow at residues 43-69, 172-192, and 234-277; these read TFHLQSSGGGGGGGSGDQCNFQSPGTH, EFEARQRSSGTSRETSKDPEL, and NNNA…PRAE. Residues 49–58 show a composition bias toward gly residues; it reads SGGGGGGGSG. The ELK domain maps to 280 to 300; the sequence is ELKNHLLRKYSGYLSSLKQEL. The homeobox; TALE-type DNA-binding region spans 301–364; sequence SKKKKKGKLP…NQRKRHWKPS (64 aa).

It belongs to the TALE/KNOX homeobox family. Expressed only in the stems.

The protein resides in the nucleus. Probably binds to the DNA sequence 5'-TGAC-3'. This chain is Homeobox protein knotted-1-like 1, found in Malus domestica (Apple).